The primary structure comprises 134 residues: Protein NrdI (134 aa).

This sequence belongs to the NrdI family.

Probably involved in ribonucleotide reductase function. The polypeptide is Protein NrdI (Rhizobium leguminosarum bv. trifolii (strain WSM2304)).